We begin with the raw amino-acid sequence, 314 residues long: Leucine-rich repeat-containing protein 52 (314 aa).

Residues methionine 1–glycine 23 form the signal peptide. Residues serine 24–leucine 53 enclose the LRRNT domain. Over serine 24–aspartate 244 the chain is Extracellular. Disulfide bonds link cysteine 26–cysteine 32 and cysteine 30–cysteine 39. 5 LRR repeats span residues asparagine 54–leucine 73, aspartate 78–glycine 99, arginine 102–valine 123, asparagine 126–asparagine 148, and serine 151–histidine 172. N-linked (GlcNAc...) asparagine glycosylation is found at asparagine 112, asparagine 131, and asparagine 148. In terms of domain architecture, LRRCT spans asparagine 184–threonine 238. 2 disulfide bridges follow: cysteine 188–cysteine 214 and cysteine 190–cysteine 236. N-linked (GlcNAc...) asparagine glycosylation is found at asparagine 189 and asparagine 211. Residues tyrosine 245–leucine 265 traverse the membrane as a helical segment. The Cytoplasmic portion of the chain corresponds to threonine 266 to isoleucine 314.

Interacts with KCNMA1. Interacts with KCNU1; this interaction may be required for LRRC52 stability and changes the channel gating properties. N-glycosylated. As to expression, testis-specific (at protein level). At the mRNA level, also detected in kidney, ventricle, spinal cord and skeletal muscle, although at lower levels compared to testis. Expression in testis at the protein level requires the presence of KCNU1.

It localises to the cell membrane. In terms of biological role, auxiliary protein of the large-conductance, voltage and calcium-activated potassium channel (BK alpha). Modulates gating properties by producing a marked shift in the BK channel's voltage dependence of activation in the hyperpolarizing direction, and in the absence of calcium. KCNU1 channel auxiliary protein. Modulates KCNU1 gating properties, shifting KCNU1 gating to more negative potentials at a given pH. In Mus musculus (Mouse), this protein is Leucine-rich repeat-containing protein 52 (Lrrc52).